The following is a 333-amino-acid chain: Holliday junction branch migration complex subunit RuvB (333 aa).

A large ATPase domain (RuvB-L) region spans residues 1 to 182 (MDERLVSGSA…FGVISRLEYY (182 aa)). ATP is bound by residues Leu-21, Arg-22, Gly-63, Lys-66, Thr-67, Thr-68, 129-131 (EDY), Arg-172, Tyr-182, and Arg-219. Mg(2+) is bound at residue Thr-67. The interval 183-253 (QVDQLAQIIE…LAVEALERLQ (71 aa)) is small ATPAse domain (RuvB-S). The segment at 256 to 333 (RLGLDHIDHK…AHLGMEVPKR (78 aa)) is head domain (RuvB-H). DNA contacts are provided by Arg-311 and Arg-316.

It belongs to the RuvB family. In terms of assembly, homohexamer. Forms an RuvA(8)-RuvB(12)-Holliday junction (HJ) complex. HJ DNA is sandwiched between 2 RuvA tetramers; dsDNA enters through RuvA and exits via RuvB. An RuvB hexamer assembles on each DNA strand where it exits the tetramer. Each RuvB hexamer is contacted by two RuvA subunits (via domain III) on 2 adjacent RuvB subunits; this complex drives branch migration. In the full resolvosome a probable DNA-RuvA(4)-RuvB(12)-RuvC(2) complex forms which resolves the HJ.

Its subcellular location is the cytoplasm. It carries out the reaction ATP + H2O = ADP + phosphate + H(+). Its function is as follows. The RuvA-RuvB-RuvC complex processes Holliday junction (HJ) DNA during genetic recombination and DNA repair, while the RuvA-RuvB complex plays an important role in the rescue of blocked DNA replication forks via replication fork reversal (RFR). RuvA specifically binds to HJ cruciform DNA, conferring on it an open structure. The RuvB hexamer acts as an ATP-dependent pump, pulling dsDNA into and through the RuvAB complex. RuvB forms 2 homohexamers on either side of HJ DNA bound by 1 or 2 RuvA tetramers; 4 subunits per hexamer contact DNA at a time. Coordinated motions by a converter formed by DNA-disengaged RuvB subunits stimulates ATP hydrolysis and nucleotide exchange. Immobilization of the converter enables RuvB to convert the ATP-contained energy into a lever motion, pulling 2 nucleotides of DNA out of the RuvA tetramer per ATP hydrolyzed, thus driving DNA branch migration. The RuvB motors rotate together with the DNA substrate, which together with the progressing nucleotide cycle form the mechanistic basis for DNA recombination by continuous HJ branch migration. Branch migration allows RuvC to scan DNA until it finds its consensus sequence, where it cleaves and resolves cruciform DNA. The chain is Holliday junction branch migration complex subunit RuvB from Geobacillus thermodenitrificans (strain NG80-2).